The following is a 455-amino-acid chain: Exodeoxyribonuclease 7 large subunit (455 aa).

This sequence belongs to the XseA family. Heterooligomer composed of large and small subunits.

It localises to the cytoplasm. It catalyses the reaction Exonucleolytic cleavage in either 5'- to 3'- or 3'- to 5'-direction to yield nucleoside 5'-phosphates.. Bidirectionally degrades single-stranded DNA into large acid-insoluble oligonucleotides, which are then degraded further into small acid-soluble oligonucleotides. The polypeptide is Exodeoxyribonuclease 7 large subunit (Escherichia coli O7:K1 (strain IAI39 / ExPEC)).